Reading from the N-terminus, the 704-residue chain is PHD finger protein MALE MEIOCYTE DEATH 1 (704 aa).

The PHD-type zinc-finger motif lies at 606–656; sequence MVKCICRARDDDGERMISCDVCEVWQHTRCCGIDDSDTLPPLFVCSNCCEE. Zn(2+) is bound by residues C609, C611, C624, C627, H632, C635, C650, and C653.

Interacts with JMJ16 in the nucleus of male meiocytes, especially on pachytene chromosomes. As to expression, expressed in inflorescence, specifically in male meiocytes.

The protein resides in the nucleus. Probable transcription factor required for chromosome organization and progression during male meiosis (e.g. microsporogenesis). Necessary for fertility and meiotic progressive compaction of prophase I chromosomes to metaphase I bivalents. Together with JMJ16, promotes gene expression in male meiocytes in an H3K9me3-dependent manner, and contributes to meiotic chromosome condensation by triggering some condensin promoters (e.g. CAP-D3 and CAP-H). The polypeptide is PHD finger protein MALE MEIOCYTE DEATH 1 (Arabidopsis thaliana (Mouse-ear cress)).